The following is a 224-amino-acid chain: 7-cyano-7-deazaguanine synthase (224 aa).

10–20 (LSGGLDSATVV) is an ATP binding site. Zn(2+) contacts are provided by C189, C199, C202, and C205.

It belongs to the QueC family. The cofactor is Zn(2+).

It catalyses the reaction 7-carboxy-7-deazaguanine + NH4(+) + ATP = 7-cyano-7-deazaguanine + ADP + phosphate + H2O + H(+). It functions in the pathway purine metabolism; 7-cyano-7-deazaguanine biosynthesis. In terms of biological role, catalyzes the ATP-dependent conversion of 7-carboxy-7-deazaguanine (CDG) to 7-cyano-7-deazaguanine (preQ(0)). The chain is 7-cyano-7-deazaguanine synthase from Pseudomonas putida (strain W619).